The following is a 366-amino-acid chain: NADP-dependent oxidoreductase domain-containing protein 1 (366 aa).

The protein belongs to the pyrroline-5-carboxylate reductase family.

In terms of biological role, probable oxidoreductase. In Mus musculus (Mouse), this protein is NADP-dependent oxidoreductase domain-containing protein 1 (Noxred1).